The chain runs to 729 residues: Sorting nexin mvp1 (729 aa).

Disordered stretches follow at residues 1-43 (MSLF…SANL) and 177-340 (PLPK…EEPN). The 109-residue stretch at 356 to 464 (EETVTVNLLP…VMFLTVPTEL (109 aa)) folds into the PX domain. Residues R392, S394, K418, and R431 each contribute to the a 1,2-diacyl-sn-glycero-3-phospho-(1D-myo-inositol-3-phosphate) site.

It belongs to the sorting nexin family.

The protein localises to the cytoplasm. The protein resides in the membrane. In terms of biological role, required for vacuolar protein sorting. This Aspergillus fumigatus (strain ATCC MYA-4609 / CBS 101355 / FGSC A1100 / Af293) (Neosartorya fumigata) protein is Sorting nexin mvp1 (mvp1).